The primary structure comprises 212 residues: Pyridoxine/pyridoxamine 5'-phosphate oxidase (212 aa).

Residues 7 to 10 (RREY) and Lys-66 contribute to the substrate site. Residues 61–66 (RIVLLK), 76–77 (YT), Arg-82, Lys-83, and Gln-105 each bind FMN. Substrate is bound by residues Tyr-123, Arg-127, and Ser-131. Residues 140-141 (QS) and Trp-185 each bind FMN. Substrate is bound at residue 191–193 (RLH). Arg-195 lines the FMN pocket.

It belongs to the pyridoxamine 5'-phosphate oxidase family. Homodimer. FMN serves as cofactor.

The catalysed reaction is pyridoxamine 5'-phosphate + O2 + H2O = pyridoxal 5'-phosphate + H2O2 + NH4(+). The enzyme catalyses pyridoxine 5'-phosphate + O2 = pyridoxal 5'-phosphate + H2O2. The protein operates within cofactor metabolism; pyridoxal 5'-phosphate salvage; pyridoxal 5'-phosphate from pyridoxamine 5'-phosphate: step 1/1. Its pathway is cofactor metabolism; pyridoxal 5'-phosphate salvage; pyridoxal 5'-phosphate from pyridoxine 5'-phosphate: step 1/1. Its function is as follows. Catalyzes the oxidation of either pyridoxine 5'-phosphate (PNP) or pyridoxamine 5'-phosphate (PMP) into pyridoxal 5'-phosphate (PLP). This chain is Pyridoxine/pyridoxamine 5'-phosphate oxidase, found in Hahella chejuensis (strain KCTC 2396).